The sequence spans 760 residues: MLARSVRTLVVSPKTVFRFRGCLFEKHVSTASADDRAIVSLFDSPHAAFKYPSTISTGLFGHSQLSHPNAFISLAEATLVRAQLLTDRILRARSSRDELLKVVKNLDRLSDMLCSVIDLAELIRNAHPDRNWATAGHHVYEQLCEFMNVLNTHVGLYEVLKLVLADASIVKTLSPEAYQTALIFWRDFEKSAINLPPEERQKFVSLSSDILVLGREFLENANAPRPPASIKPEHMVGIKDKGLGVRLQLQAQFTRRDLLVYPGSLQAQMIMRSAPDEEPRRRMYIAANSSTDQQIXTLERLLKTRAELARLVGRSSFAHMTLDDKMAKTPENVMNFLGALIGQTRPFARRALKTLSARKQAHHGLSSLPTIQAWDRDFYCPPEPPAPPIPLPPLTLGTIFMGLSRLFKYLYGITLRPTEAQTGEVWHSDVHKLEVIDEDKGLIGWIYADLFARHGKSSGAAHYTVRCSRRTDLDDDLGDGGLTGHEELIQQNLEFEKVKRHKIPNQDGVYQLPLVVLLCEFTRPSVLKGATVLEWHDVMTLFHEMGHAMLAMVGRTEYQNVSGTRCATDFVELPSILMEHFLSSPVVLSLFDLDGTHSLRQVGNTHEDPCHSIDTFSQIILASLDQIYHSPAVLDNSTFSTTDELENLTVSKGVIPHVPSTSFQTQFGHLFGYGATYYSYLFDRAIASRVWKKVFEKDPLKREVGEKYKLEVLRWGGGRDPWKMVSKLLDASELEKGDAEAMREVGRWRIEDEVGLPGRH.

The transit peptide at 1 to 19 (MLARSVRTLVVSPKTVFRF) directs the protein to the mitochondrion. H543 is a Zn(2+) binding site. E544 is an active-site residue. Residue H547 participates in Zn(2+) binding.

It belongs to the peptidase M3 family. Zn(2+) is required as a cofactor.

The protein localises to the mitochondrion matrix. It catalyses the reaction Release of an N-terminal octapeptide as second stage of processing of some proteins imported into the mitochondrion.. Functionally, cleaves proteins, imported into the mitochondrion, to their mature size. While most mitochondrial precursor proteins are processed to the mature form in one step by mitochondrial processing peptidase (MPP), the sequential cleavage by MIP of an octapeptide after initial processing by MPP is a required step for a subgroup of nuclear-encoded precursor proteins destined for the matrix or the inner membrane. The polypeptide is Mitochondrial intermediate peptidase (OCT1) (Leucoagaricus gongylophorus (Leaf-cutting ant fungus)).